Consider the following 205-residue polypeptide: MQEKKEEDLQQALNKVSEVGIDEVGKGAIFGPVFAAAVVLTEKNKFILKQFGVTDSKKLTPKKRKLLLPKILLLSSDYGIGQSSAREIDKLGIRVATELSMIRALRKLKEKPSELIIDGPLLLRPWNGIQKNIVSGDSKFISIASASIVAKVSRDNLMERLEKNYSGYLIFKNKGYGTREHLSLIKKNGITELHRKSFLKKSKLI.

One can recognise an RNase H type-2 domain in the interval 16–205; the sequence is VSEVGIDEVG…KSFLKKSKLI (190 aa). A divalent metal cation contacts are provided by Asp22, Glu23, and Asp118.

It belongs to the RNase HII family. Mn(2+) is required as a cofactor. Mg(2+) serves as cofactor.

The protein resides in the cytoplasm. It carries out the reaction Endonucleolytic cleavage to 5'-phosphomonoester.. Its function is as follows. Endonuclease that specifically degrades the RNA of RNA-DNA hybrids. The polypeptide is Ribonuclease HII (Prochlorococcus marinus (strain AS9601)).